A 215-amino-acid chain; its full sequence is 3-isopropylmalate dehydratase small subunit (215 aa).

Belongs to the LeuD family. LeuD type 1 subfamily. Heterodimer of LeuC and LeuD.

It carries out the reaction (2R,3S)-3-isopropylmalate = (2S)-2-isopropylmalate. The protein operates within amino-acid biosynthesis; L-leucine biosynthesis; L-leucine from 3-methyl-2-oxobutanoate: step 2/4. Catalyzes the isomerization between 2-isopropylmalate and 3-isopropylmalate, via the formation of 2-isopropylmaleate. The polypeptide is 3-isopropylmalate dehydratase small subunit (Teredinibacter turnerae (strain ATCC 39867 / T7901)).